Here is a 507-residue protein sequence, read N- to C-terminus: ATP synthase subunit alpha, chloroplastic (507 aa).

170 to 177 (GDRQTGKT) is a binding site for ATP. Disordered stretches follow at residues 278-325 (PRRP…TQAG), 392-430 (EPEASAQFASDPDKATRNQSARGQRSRELLKQSQPAPLP), and 452-471 (GQVQGSPAQSREYLVTNKPE). The segment covering 282–303 (PGREAHPGDVPHLHPRPPERAA) has biased composition (basic and acidic residues). Polar residues predominate over residues 305 to 322 (LSSQPGEGSTTASPTVET).

This sequence belongs to the ATPase alpha/beta chains family. In terms of assembly, F-type ATPases have 2 components, CF(1) - the catalytic core - and CF(0) - the membrane proton channel. CF(1) has five subunits: alpha(3), beta(3), gamma(1), delta(1), epsilon(1). CF(0) has four main subunits: a, b, b' and c.

It localises to the plastid. The protein resides in the chloroplast thylakoid membrane. It catalyses the reaction ATP + H2O + 4 H(+)(in) = ADP + phosphate + 5 H(+)(out). In terms of biological role, produces ATP from ADP in the presence of a proton gradient across the membrane. The alpha chain is a regulatory subunit. The protein is ATP synthase subunit alpha, chloroplastic of Selaginella uncinata (Blue spike-moss).